The sequence spans 1115 residues: Phytochrome E (1115 aa).

The GAF domain maps to 213-383; sequence DIGTLCDTVV…AFSLQLYMEL (171 aa). Cysteine 318 provides a ligand contact to phytochromobilin. Residues 598–669 form the PAS 1 domain; that stretch reads MALELVRLVE…ALMCRALQGE (72 aa). One can recognise a PAC domain in the interval 672-728; the sequence is RNVEVKLLKFGNHPTKEVVYLVVNACTSRDYKNDIIGVCFVGQDITPEKAVMDKFVR. Residues 732 to 803 enclose the PAS 2 domain; sequence DYEAIIQSLN…DALTKFMILL (72 aa). Residues 880–1100 form the Histidine kinase domain; it reads YIQQQMKNPL…YFLIDLDFKT (221 aa).

The protein belongs to the phytochrome family. In terms of assembly, homodimer. In terms of processing, contains one covalently linked phytochromobilin chromophore.

Its function is as follows. Regulatory photoreceptor which exists in two forms that are reversibly interconvertible by light: the Pr form that absorbs maximally in the red region of the spectrum and the Pfr form that absorbs maximally in the far-red region. Photoconversion of Pr to Pfr induces an array of morphogenic responses, whereas reconversion of Pfr to Pr cancels the induction of those responses. Pfr controls the expression of a number of nuclear genes including those encoding the small subunit of ribulose-bisphosphate carboxylase, chlorophyll A/B binding protein, protochlorophyllide reductase, rRNA, etc. It also controls the expression of its own gene(s) in a negative feedback fashion. This chain is Phytochrome E (PHYE), found in Ipomoea nil (Japanese morning glory).